The following is a 228-amino-acid chain: ATP phosphoribosyltransferase (228 aa).

The protein belongs to the ATP phosphoribosyltransferase family. Short subfamily. Heteromultimer composed of HisG and HisZ subunits.

The protein localises to the cytoplasm. The catalysed reaction is 1-(5-phospho-beta-D-ribosyl)-ATP + diphosphate = 5-phospho-alpha-D-ribose 1-diphosphate + ATP. Its pathway is amino-acid biosynthesis; L-histidine biosynthesis; L-histidine from 5-phospho-alpha-D-ribose 1-diphosphate: step 1/9. Its function is as follows. Catalyzes the condensation of ATP and 5-phosphoribose 1-diphosphate to form N'-(5'-phosphoribosyl)-ATP (PR-ATP). Has a crucial role in the pathway because the rate of histidine biosynthesis seems to be controlled primarily by regulation of HisG enzymatic activity. The chain is ATP phosphoribosyltransferase from Acinetobacter baylyi (strain ATCC 33305 / BD413 / ADP1).